The primary structure comprises 106 residues: Nucleoid-associated protein DIP0260 (106 aa).

Belongs to the YbaB/EbfC family. Homodimer.

The protein resides in the cytoplasm. It is found in the nucleoid. In terms of biological role, binds to DNA and alters its conformation. May be involved in regulation of gene expression, nucleoid organization and DNA protection. This chain is Nucleoid-associated protein DIP0260, found in Corynebacterium diphtheriae (strain ATCC 700971 / NCTC 13129 / Biotype gravis).